Here is a 350-residue protein sequence, read N- to C-terminus: Peroxidase 10 (350 aa).

The first 27 residues, 1–27 (MDHKMSMYLFVSYLAIFTLFFKGFVSS), serve as a signal peptide directing secretion. Intrachain disulfides connect Cys57/Cys137, Cys90/Cys95, Cys143/Cys346, and Cys222/Cys256. His88 acts as the Proton acceptor in catalysis. The Ca(2+) site is built by Asp89, Val92, Gly94, Asp96, and Ser98. Asn102 carries N-linked (GlcNAc...) asparagine glycosylation. Pro185 provides a ligand contact to substrate. An N-linked (GlcNAc...) asparagine glycan is attached at Asn193. Position 215 (His215) interacts with heme b. Ca(2+) is bound at residue Thr216. Ca(2+) is bound by residues Asp270, Ser273, and Asp278.

The protein belongs to the peroxidase family. Classical plant (class III) peroxidase subfamily. Heme b is required as a cofactor. Ca(2+) serves as cofactor. As to expression, expressed in the whole plant, with the highest expression in roots.

The protein localises to the secreted. The enzyme catalyses 2 a phenolic donor + H2O2 = 2 a phenolic radical donor + 2 H2O. In terms of biological role, removal of H(2)O(2), oxidation of toxic reductants, biosynthesis and degradation of lignin, suberization, auxin catabolism, response to environmental stresses such as wounding, pathogen attack and oxidative stress. These functions might be dependent on each isozyme/isoform in each plant tissue. The sequence is that of Peroxidase 10 (PER10) from Arabidopsis thaliana (Mouse-ear cress).